Here is a 172-residue protein sequence, read N- to C-terminus: uncharacterized protein (172 aa).

Disordered stretches follow at residues 1–39 (MAKV…NSNN) and 90–112 (DLNG…GSIN). The segment covering 98–110 (NDSNNDNSPSRGS) has biased composition (low complexity).

This is an uncharacterized protein from Dictyostelium discoideum (Social amoeba).